Here is a 197-residue protein sequence, read N- to C-terminus: Putative ankyrin repeat protein R875 (197 aa).

4 ANK repeats span residues 78 to 106 (LNKC…DIRE), 107 to 136 (NDDC…DIRA), 138 to 166 (DDDA…NFRK), and 168 to 196 (NDYE…VLHE).

In Acanthamoeba polyphaga mimivirus (APMV), this protein is Putative ankyrin repeat protein R875.